Here is a 430-residue protein sequence, read N- to C-terminus: Enolase (430 aa).

Q165 contributes to the (2R)-2-phosphoglycerate binding site. E207 serves as the catalytic Proton donor. Mg(2+) contacts are provided by D244, E287, and D314. Residues K339, R368, S369, and K390 each coordinate (2R)-2-phosphoglycerate. K339 serves as the catalytic Proton acceptor.

This sequence belongs to the enolase family. Component of the RNA degradosome, a multiprotein complex involved in RNA processing and mRNA degradation. Requires Mg(2+) as cofactor.

It is found in the cytoplasm. The protein localises to the secreted. Its subcellular location is the cell surface. The enzyme catalyses (2R)-2-phosphoglycerate = phosphoenolpyruvate + H2O. Its pathway is carbohydrate degradation; glycolysis; pyruvate from D-glyceraldehyde 3-phosphate: step 4/5. In terms of biological role, catalyzes the reversible conversion of 2-phosphoglycerate (2-PG) into phosphoenolpyruvate (PEP). It is essential for the degradation of carbohydrates via glycolysis. The sequence is that of Enolase from Stenotrophomonas maltophilia (strain R551-3).